A 129-amino-acid chain; its full sequence is UPF0102 protein amb4503 (129 aa).

Belongs to the UPF0102 family.

The polypeptide is UPF0102 protein amb4503 (Paramagnetospirillum magneticum (strain ATCC 700264 / AMB-1) (Magnetospirillum magneticum)).